A 354-amino-acid polypeptide reads, in one-letter code: GTPase Obg (354 aa).

The Obg domain maps to 1-159 (MKYIDEAIIH…ADLKLELKVL (159 aa)). Positions 160–334 (ADVGLLGMPN…LTYAIMEFLE (175 aa)) constitute an OBG-type G domain. GTP-binding positions include 166–173 (GMPNAGKS), 191–195 (FTTMH), 213–216 (DIPG), 284–287 (NKVD), and 315–317 (SAM). Positions 173 and 193 each coordinate Mg(2+).

It belongs to the TRAFAC class OBG-HflX-like GTPase superfamily. OBG GTPase family. As to quaternary structure, monomer. It depends on Mg(2+) as a cofactor.

The protein localises to the cytoplasm. Its function is as follows. An essential GTPase which binds GTP, GDP and possibly (p)ppGpp with moderate affinity, with high nucleotide exchange rates and a fairly low GTP hydrolysis rate. Plays a role in control of the cell cycle, stress response, ribosome biogenesis and in those bacteria that undergo differentiation, in morphogenesis control. The chain is GTPase Obg from Nitrosospira multiformis (strain ATCC 25196 / NCIMB 11849 / C 71).